Reading from the N-terminus, the 368-residue chain is Protein RecA (368 aa).

ATP is bound at residue 80–87; the sequence is GPESSGKT. Positions 344–353 are enriched in polar residues; sequence NPTFTATPDS. A disordered region spans residues 344–368; sequence NPTFTATPDSENADNADDEFSEEEL. Acidic residues predominate over residues 354-368; that stretch reads ENADNADDEFSEEEL.

This sequence belongs to the RecA family.

It localises to the cytoplasm. Can catalyze the hydrolysis of ATP in the presence of single-stranded DNA, the ATP-dependent uptake of single-stranded DNA by duplex DNA, and the ATP-dependent hybridization of homologous single-stranded DNAs. It interacts with LexA causing its activation and leading to its autocatalytic cleavage. The polypeptide is Protein RecA (Mannheimia haemolytica (Pasteurella haemolytica)).